The primary structure comprises 329 residues: Phosphate import ATP-binding protein PstB (329 aa).

One can recognise an ABC transporter domain in the interval 83–325; sequence FEIRNFNFWY…PKQKATNSYI (243 aa). 116 to 123 provides a ligand contact to ATP; sequence GKSGCGKS.

This sequence belongs to the ABC transporter superfamily. Phosphate importer (TC 3.A.1.7) family. As to quaternary structure, the complex is composed of two ATP-binding proteins (PstB), two transmembrane proteins (PstC and PstA) and a solute-binding protein (PstS).

Its subcellular location is the cell membrane. It catalyses the reaction phosphate(out) + ATP + H2O = ADP + 2 phosphate(in) + H(+). Functionally, part of the ABC transporter complex PstSACB involved in phosphate import. Responsible for energy coupling to the transport system. This is Phosphate import ATP-binding protein PstB from Mycoplasma genitalium (strain ATCC 33530 / DSM 19775 / NCTC 10195 / G37) (Mycoplasmoides genitalium).